A 245-amino-acid polypeptide reads, in one-letter code: Polyhedrin (245 aa).

It belongs to the polyhedrin family.

Major component of the virus occlusion bodies, which are large proteinaceous structures (polyhedra), that protect the virus from the outside environment for extended periods until they are ingested by insect larvae. The sequence is that of Polyhedrin (PH) from Orgyia pseudotsugata multicapsid polyhedrosis virus (OpMNPV).